The following is a 511-amino-acid chain: Cytochrome P450 4B1 (511 aa).

Residues Glu315 and Cys453 each contribute to the heme site.

The protein belongs to the cytochrome P450 family. It depends on heme as a cofactor.

It localises to the endoplasmic reticulum membrane. Its subcellular location is the microsome membrane. It catalyses the reaction an organic molecule + reduced [NADPH--hemoprotein reductase] + O2 = an alcohol + oxidized [NADPH--hemoprotein reductase] + H2O + H(+). Its function is as follows. Cytochromes P450 are a group of heme-thiolate monooxygenases. In liver microsomes, this enzyme is involved in an NADPH-dependent electron transport pathway. It oxidizes a variety of structurally unrelated compounds, including steroids, fatty acids, and xenobiotics. This Rattus norvegicus (Rat) protein is Cytochrome P450 4B1 (Cyp4b1).